The sequence spans 131 residues: Holo-[acyl-carrier-protein] synthase (131 aa).

Mg(2+) contacts are provided by D8 and E59.

This sequence belongs to the P-Pant transferase superfamily. AcpS family. Requires Mg(2+) as cofactor.

It is found in the cytoplasm. The catalysed reaction is apo-[ACP] + CoA = holo-[ACP] + adenosine 3',5'-bisphosphate + H(+). Transfers the 4'-phosphopantetheine moiety from coenzyme A to a Ser of acyl-carrier-protein. This chain is Holo-[acyl-carrier-protein] synthase, found in Rickettsia conorii (strain ATCC VR-613 / Malish 7).